The sequence spans 341 residues: DNA-directed RNA polymerase subunit alpha (341 aa).

Positions 1 to 237 (MLSLSKNWNA…EQLQLFISFE (237 aa)) are alpha N-terminal domain (alpha-NTD). The alpha C-terminal domain (alpha-CTD) stretch occupies residues 247 to 341 (TDALPFSPYL…LSKRYEDSYN (95 aa)).

This sequence belongs to the RNA polymerase alpha chain family. Homodimer. The RNAP catalytic core consists of 2 alpha, 1 beta, 1 beta' and 1 omega subunit. When a sigma factor is associated with the core the holoenzyme is formed, which can initiate transcription.

It catalyses the reaction RNA(n) + a ribonucleoside 5'-triphosphate = RNA(n+1) + diphosphate. Its function is as follows. DNA-dependent RNA polymerase catalyzes the transcription of DNA into RNA using the four ribonucleoside triphosphates as substrates. This chain is DNA-directed RNA polymerase subunit alpha, found in Rickettsia bellii (strain RML369-C).